Reading from the N-terminus, the 463-residue chain is Chaperone SurA (463 aa).

Positions 1–25 (MTKPFSVVLASLLAITSTVSPLASA) are cleaved as a signal peptide. PpiC domains lie at 174–276 (GSQY…KLVE) and 289–388 (VTEY…QRVG). 2 disordered regions span residues 328–348 (QATA…GDLG) and 432–463 (RTGD…KPTR). Residues 440–452 (NATAAPAKSADPA) are compositionally biased toward low complexity. The segment covering 453–463 (APSPPPAKPTR) has biased composition (pro residues).

It localises to the periplasm. The enzyme catalyses [protein]-peptidylproline (omega=180) = [protein]-peptidylproline (omega=0). In terms of biological role, chaperone involved in the correct folding and assembly of outer membrane proteins. Recognizes specific patterns of aromatic residues and the orientation of their side chains, which are found more frequently in integral outer membrane proteins. May act in both early periplasmic and late outer membrane-associated steps of protein maturation. This is Chaperone SurA from Xanthomonas euvesicatoria pv. vesicatoria (strain 85-10) (Xanthomonas campestris pv. vesicatoria).